The chain runs to 341 residues: Anthranilate phosphoribosyltransferase (341 aa).

Residues glycine 79, 82 to 83 (GD), threonine 87, 89 to 92 (NIST), 107 to 115 (KHGNRAVSS), and serine 119 each bind 5-phospho-alpha-D-ribose 1-diphosphate. Glycine 79 is a binding site for anthranilate. Serine 91 contributes to the Mg(2+) binding site. Anthranilate is bound at residue asparagine 110. Arginine 165 contacts anthranilate. Residues aspartate 224 and glutamate 225 each contribute to the Mg(2+) site.

It belongs to the anthranilate phosphoribosyltransferase family. As to quaternary structure, homodimer. The cofactor is Mg(2+).

The catalysed reaction is N-(5-phospho-beta-D-ribosyl)anthranilate + diphosphate = 5-phospho-alpha-D-ribose 1-diphosphate + anthranilate. Its pathway is amino-acid biosynthesis; L-tryptophan biosynthesis; L-tryptophan from chorismate: step 2/5. In terms of biological role, catalyzes the transfer of the phosphoribosyl group of 5-phosphorylribose-1-pyrophosphate (PRPP) to anthranilate to yield N-(5'-phosphoribosyl)-anthranilate (PRA). The protein is Anthranilate phosphoribosyltransferase of Bacillus cereus (strain ATCC 14579 / DSM 31 / CCUG 7414 / JCM 2152 / NBRC 15305 / NCIMB 9373 / NCTC 2599 / NRRL B-3711).